We begin with the raw amino-acid sequence, 156 residues long: ATP synthase subunit b (156 aa).

The chain crosses the membrane as a helical span at residues 3–23; it reads ITLTIFAQALAFAGLIWIVAT.

The protein belongs to the ATPase B chain family. F-type ATPases have 2 components, F(1) - the catalytic core - and F(0) - the membrane proton channel. F(1) has five subunits: alpha(3), beta(3), gamma(1), delta(1), epsilon(1). F(0) has three main subunits: a(1), b(2) and c(10-14). The alpha and beta chains form an alternating ring which encloses part of the gamma chain. F(1) is attached to F(0) by a central stalk formed by the gamma and epsilon chains, while a peripheral stalk is formed by the delta and b chains.

The protein localises to the cell inner membrane. Its function is as follows. F(1)F(0) ATP synthase produces ATP from ADP in the presence of a proton or sodium gradient. F-type ATPases consist of two structural domains, F(1) containing the extramembraneous catalytic core and F(0) containing the membrane proton channel, linked together by a central stalk and a peripheral stalk. During catalysis, ATP synthesis in the catalytic domain of F(1) is coupled via a rotary mechanism of the central stalk subunits to proton translocation. In terms of biological role, component of the F(0) channel, it forms part of the peripheral stalk, linking F(1) to F(0). This chain is ATP synthase subunit b, found in Xanthomonas oryzae pv. oryzae (strain MAFF 311018).